The chain runs to 319 residues: Ankyrin repeat domain-containing protein 1 (319 aa).

The stretch at 61–89 forms a coiled coil; it reads KTEKQREAELKKKKLEQRSKLENLEDLEI. ANK repeat units follow at residues 152–181, 185–214, 218–247, 251–280, and 284–315; these read YKRTALHRACLEGHLAIVEKLIEAGAQIEF, LESTAIHWASRGGSLDVLKLLLNKGAKISA, LLSTPLHVAVRTGHYECAEHLIACEADLNA, EGDTPLHDAVRLNRYKMIRLLITYGADLNV, and AGKTPMDLVLHWQNGTKAIFDSLKENSYKASR.

In terms of assembly, interacts with TTN/titin and YBX1.

The protein resides in the nucleus. Functionally, may play an important role in endothelial cell activation. May act as a nuclear transcription factor that negatively regulates the expression of cardiac genes. The protein is Ankyrin repeat domain-containing protein 1 (ANKRD1) of Bos taurus (Bovine).